Consider the following 440-residue polypeptide: Serine hydroxymethyltransferase (440 aa).

Residues leucine 119 and 123–125 each bind (6S)-5,6,7,8-tetrahydrofolate; that span reads GHL. At lysine 228 the chain carries N6-(pyridoxal phosphate)lysine. 370–372 contacts (6S)-5,6,7,8-tetrahydrofolate; it reads SPF.

Belongs to the SHMT family. Homodimer. The cofactor is pyridoxal 5'-phosphate.

Its subcellular location is the cytoplasm. The enzyme catalyses (6R)-5,10-methylene-5,6,7,8-tetrahydrofolate + glycine + H2O = (6S)-5,6,7,8-tetrahydrofolate + L-serine. It functions in the pathway one-carbon metabolism; tetrahydrofolate interconversion. Its pathway is amino-acid biosynthesis; glycine biosynthesis; glycine from L-serine: step 1/1. Its function is as follows. Catalyzes the reversible interconversion of serine and glycine with tetrahydrofolate (THF) serving as the one-carbon carrier. This reaction serves as the major source of one-carbon groups required for the biosynthesis of purines, thymidylate, methionine, and other important biomolecules. Also exhibits THF-independent aldolase activity toward beta-hydroxyamino acids, producing glycine and aldehydes, via a retro-aldol mechanism. The sequence is that of Serine hydroxymethyltransferase from Chlorobaculum tepidum (strain ATCC 49652 / DSM 12025 / NBRC 103806 / TLS) (Chlorobium tepidum).